The primary structure comprises 237 residues: Large ribosomal subunit protein uL2 (237 aa).

The tract at residues 202–237 (FGGGNRKHPGKPTTVSRNAPPGRKVGHIAARRTGKR) is disordered. The segment covering 225-237 (KVGHIAARRTGKR) has biased composition (basic residues).

The protein belongs to the universal ribosomal protein uL2 family. In terms of assembly, part of the 50S ribosomal subunit. Forms a bridge to the 30S subunit in the 70S ribosome.

One of the primary rRNA binding proteins. Required for association of the 30S and 50S subunits to form the 70S ribosome, for tRNA binding and peptide bond formation. It has been suggested to have peptidyltransferase activity; this is somewhat controversial. Makes several contacts with the 16S rRNA in the 70S ribosome. The sequence is that of Large ribosomal subunit protein uL2 from Methanococcoides burtonii (strain DSM 6242 / NBRC 107633 / OCM 468 / ACE-M).